A 1318-amino-acid polypeptide reads, in one-letter code: 1-phosphatidylinositol 4,5-bisphosphate phosphodiesterase classes I and II (1318 aa).

Residues 318-466 enclose the PI-PLC X-box domain; sequence DDMDQPMSHY…LRRKIIIKNK (149 aa). Active-site residues include His333 and His378. Lys464 and Lys466 together coordinate substrate. Over residues 466–481 the composition is skewed to basic residues; that stretch reads KKKHHHHHHHHHHKKP. Disordered regions lie at residues 466–489 and 505–594; these read KKKH…TPAA and QQVG…KETE. 2 stretches are compositionally biased toward low complexity: residues 528-543 and 554-563; these read ATGT…AGHA and KDSTGSSDSD. Residues 571-580 show a composition bias toward polar residues; the sequence is LPNTTPNLPS. The segment covering 585 to 594 has biased composition (basic and acidic residues); that stretch reads PPEKAQKETE. A PI-PLC Y-box domain is found at 599–715; the sequence is ISALVNYVQP…GYLLKPEFMR (117 aa). Substrate is bound by residues Ser628 and Arg655. The region spanning 715–843 is the C2 domain; that stretch reads RRSDRRLDPF…NLRSEVGQPI (129 aa). 2 disordered regions span residues 1080–1112 and 1296–1318; these read LDLG…TQES and GSHS…EMKT. Residues 1088–1107 show a composition bias toward low complexity; that stretch reads ESAAADAGEDLAGGSSSLDG.

In terms of tissue distribution, expressed in neuronal cell bodies of the optic lobe, central brain, and thoracic ganglia in adults, and the brain of larvae.

It carries out the reaction a 1,2-diacyl-sn-glycero-3-phospho-(1D-myo-inositol-4,5-bisphosphate) + H2O = 1D-myo-inositol 1,4,5-trisphosphate + a 1,2-diacyl-sn-glycerol + H(+). Functionally, the production of the second messenger molecules diacylglycerol (DAG) and inositol 1,4,5-trisphosphate (IP3) is mediated by activated phosphatidylinositol-specific phospholipase C enzymes. The polypeptide is 1-phosphatidylinositol 4,5-bisphosphate phosphodiesterase classes I and II (Plc21C) (Drosophila melanogaster (Fruit fly)).